A 236-amino-acid chain; its full sequence is Ribose-5-phosphate isomerase A (236 aa).

Substrate contacts are provided by residues 33–36 (TGST), 90–93 (DGAD), and 103–106 (KGGG). The Proton acceptor role is filled by E112. A substrate-binding site is contributed by K130.

This sequence belongs to the ribose 5-phosphate isomerase family. As to quaternary structure, homodimer.

It carries out the reaction aldehydo-D-ribose 5-phosphate = D-ribulose 5-phosphate. The protein operates within carbohydrate degradation; pentose phosphate pathway; D-ribose 5-phosphate from D-ribulose 5-phosphate (non-oxidative stage): step 1/1. Functionally, catalyzes the reversible conversion of ribose-5-phosphate to ribulose 5-phosphate. This chain is Ribose-5-phosphate isomerase A, found in Trichormus variabilis (strain ATCC 29413 / PCC 7937) (Anabaena variabilis).